A 759-amino-acid chain; its full sequence is Tripartite motif-containing protein 46 (759 aa).

The tract at residues 1–166 (MAEGEDMQTF…VERYRQSVSV (166 aa)) is required for proximal axon localization, axon formation and migration. The RING-type 1; degenerate zinc finger occupies 33-59 (CPVCQEMYKQPLVLPCTHNVCQACARE). Residues 67-98 (IGHGGDPSSEPTSPASTPSTRSPRLSRRTLPK) form a disordered region. Positions 73–89 (PSSEPTSPASTPSTRSP) are enriched in low complexity. The RING-type 2; degenerate zinc-finger motif lies at 172–231 (CQLCKPPPLEATKGCTECRATFCNECFKLFHPWGTQKAQHEPTLPTLSFRPKGLMCPDHK). A B box-type zinc finger spans residues 222-263 (PKGLMCPDHKEEVTHYCKTCQRLVCQLCRVRRTHSGHKITPV). The Zn(2+) site is built by Cys227, His230, Cys249, and His255. Residues 322–400 (AVLEEKRASL…RATEALQTFR (79 aa)) are a coiled coil. Ser330 bears the Phosphoserine mark. Residues 370 to 427 (LKETDQPCFVQAAKQLHNRIARATEALQTFRPAASSSFRHCQLDVGREMKLLTELSFL) enclose the COS domain. A required for microtubule association, proximal axon localization and axon formation region spans residues 411–429 (QLDVGREMKLLTELSFLRV). Positions 429-528 (VPEAPVIDTQ…EDVHLHTPPA (100 aa)) constitute a Fibronectin type-III domain. The region spanning 526 to 747 (PPAPVLHFFL…LQEPVGTKPE (222 aa)) is the B30.2/SPRY domain. A Phosphoserine modification is found at Ser627.

Belongs to the TRIM/RBCC family. As to quaternary structure, interacts with TUBB3 and TUBA4A. As to expression, expressed in the central nervous system, including pyramidal neurons and interneurons in the cortex and hippocampus and all neuronal cell types in the cerebral and cerebellar cortex, and in the peripheral nervous system, including the dorsal root ganglion neurons.

The protein localises to the cell projection. It localises to the axon. Its subcellular location is the cytoplasm. The protein resides in the cytoskeleton. Its function is as follows. Microtubule-associated protein that is involved in the formation of parallel microtubule bundles linked by cross-bridges in the proximal axon. Required for the uniform orientation and maintenance of the parallel microtubule fascicles, which are important for efficient cargo delivery and trafficking in axons. Thereby also required for proper axon formation, the establishment of neuronal polarity and proper neuronal migration. The protein is Tripartite motif-containing protein 46 (Trim46) of Mus musculus (Mouse).